The following is a 539-amino-acid chain: Acid-sensing ion channel 4 (539 aa).

Topologically, residues Met1–Thr68 are cytoplasmic. The chain crosses the membrane as a helical span at residues Leu69–Ala89. The Extracellular portion of the chain corresponds to Arg90–Ala438. 2 disulfides stabilise this stretch: Cys118-Cys202 and Cys180-Cys187. N-linked (GlcNAc...) asparagine glycans are attached at residues Asn191, Asn243, Asn341, and Asn376. 5 cysteine pairs are disulfide-bonded: Cys296-Cys375, Cys318-Cys371, Cys322-Cys369, Cys331-Cys353, and Cys333-Cys345. A helical membrane pass occupies residues Leu439–Leu459. The GAS motif; ion selectivity filter motif lies at Gly452–Ser454. Topologically, residues Glu460–Cys539 are cytoplasmic. The interval Glu501–Gly531 is disordered.

Belongs to the amiloride-sensitive sodium channel (TC 1.A.6) family. ASIC4 subfamily. Homotrimer. Heterotrimer; with other ASIC proteins producing functional channels. In terms of tissue distribution, expressed in brain, spinal cord and dorsal root ganglion (DRG). Expressed by a subset of sensory neurons in the DRG. Expressed by granule cells in the cerebellar cortex. In hippocampus, expression is detected in dentate gyrus granule cells, in pyramidal cells of CA1-CA3 subfields and in interneurons of the striatum oriens and radiatum of all subfields. In cerebral cortex expressed in small, medium and large pyramidal cells in layers 2, 3 and 5 respectively. Also expressed in striatum, globus pallidus, inferior and superior calliculi, amygdala, magnocellular preoptic nucleus, islands of Calleja and large neurons of olfactory tubercules.

The protein localises to the cell membrane. Its function is as follows. Does not exhibit measurable stand-alone pH-gated sodium channel activity but may form pH-gated heterotrimeric sodium channels. Its activity could also depend on alternative gating mechanisms. The protein is Acid-sensing ion channel 4 of Rattus norvegicus (Rat).